Reading from the N-terminus, the 472-residue chain is Glutamate--tRNA ligase 2 (472 aa).

The 'HIGH' region motif lies at 10 to 20; the sequence is PSPTGYLHIGG. Zn(2+)-binding residues include cysteine 99, cysteine 101, cysteine 126, and aspartate 128. The segment covering 112 to 130 has biased composition (basic and acidic residues); sequence EQQARKEKPRYDGRCRDLD. The segment at 112 to 137 is disordered; sequence EQQARKEKPRYDGRCRDLDGPPSEEV. The 'KMSKS' region motif lies at 240-244; sequence RLSKR. Lysine 243 contacts ATP.

This sequence belongs to the class-I aminoacyl-tRNA synthetase family. Glutamate--tRNA ligase type 1 subfamily. Monomer. It depends on Zn(2+) as a cofactor.

It is found in the cytoplasm. It carries out the reaction tRNA(Glu) + L-glutamate + ATP = L-glutamyl-tRNA(Glu) + AMP + diphosphate. Catalyzes the attachment of glutamate to tRNA(Glu) in a two-step reaction: glutamate is first activated by ATP to form Glu-AMP and then transferred to the acceptor end of tRNA(Glu). The polypeptide is Glutamate--tRNA ligase 2 (Halorhodospira halophila (strain DSM 244 / SL1) (Ectothiorhodospira halophila (strain DSM 244 / SL1))).